The chain runs to 81 residues: WAP four-disulfide core domain protein 13 (81 aa).

A signal peptide spans 1–22 (MRPVSPLQLLLVLSLAPQPVLG). One can recognise a WAP domain in the interval 31–74 (YILEPPPCRSEPGACNMFCTQQEECPEPLQCCSAYCGIVCTSNQ). Intrachain disulfides connect Cys38–Cys62, Cys45–Cys66, Cys49–Cys61, and Cys55–Cys70.

It is found in the secreted. Its function is as follows. Putative acid-stable proteinase inhibitor. This Mus musculus (Mouse) protein is WAP four-disulfide core domain protein 13 (Wfdc13).